Here is a 395-residue protein sequence, read N- to C-terminus: Putative 8-amino-7-oxononanoate synthase (395 aa).

Substrate is bound at residue Arg-23. 110-111 serves as a coordination point for pyridoxal 5'-phosphate; it reads GY. His-135 contributes to the substrate binding site. Residues Ser-182, 207–210, and 239–242 contribute to the pyridoxal 5'-phosphate site; these read DEAH and TFSK. Residue Lys-242 is modified to N6-(pyridoxal phosphate)lysine. Thr-356 is a binding site for substrate.

Belongs to the class-II pyridoxal-phosphate-dependent aminotransferase family. BioF subfamily. As to quaternary structure, homodimer. Requires pyridoxal 5'-phosphate as cofactor.

It carries out the reaction 6-carboxyhexanoyl-[ACP] + L-alanine + H(+) = (8S)-8-amino-7-oxononanoate + holo-[ACP] + CO2. It participates in cofactor biosynthesis; biotin biosynthesis. Functionally, catalyzes the decarboxylative condensation of pimeloyl-[acyl-carrier protein] and L-alanine to produce 8-amino-7-oxononanoate (AON), [acyl-carrier protein], and carbon dioxide. This Bacillus cereus (strain ATCC 10987 / NRS 248) protein is Putative 8-amino-7-oxononanoate synthase (bioF).